Reading from the N-terminus, the 616-residue chain is Homeodomain-interacting protein kinase 4 (616 aa).

Residues 11-347 enclose the Protein kinase domain; sequence YDIIEVLGKG…PSAALRHPFV (337 aa). Residues 17-25 and Lys-40 each bind ATP; that span reads LGKGTFGEV. Asp-136 serves as the catalytic Proton acceptor. A disordered region spans residues 487-616; that stretch reads HKARKAPAGS…SFLQHVGGHH (130 aa). Residues 497 to 512 show a composition bias toward polar residues; that stretch reads KSDSNFSNLIRLSQAS. A Phosphoserine modification is found at Ser-512. The span at 542–560 shows a compositional bias: basic and acidic residues; it reads REGDGPSIKDRPMDAERSG.

The protein belongs to the protein kinase superfamily. CMGC Ser/Thr protein kinase family. HIPK subfamily. Autophosphorylated.

The protein resides in the cytoplasm. The catalysed reaction is L-seryl-[protein] + ATP = O-phospho-L-seryl-[protein] + ADP + H(+). It carries out the reaction L-threonyl-[protein] + ATP = O-phospho-L-threonyl-[protein] + ADP + H(+). Functionally, protein kinase that phosphorylates TP53, and thus induces TP53 repression of BIRC5 promoter. May act as a corepressor of transcription factors (Potential). In Rattus norvegicus (Rat), this protein is Homeodomain-interacting protein kinase 4 (Hipk4).